The primary structure comprises 487 residues: UDP-N-acetylmuramate--L-alanine ligase (487 aa).

126–132 (GTHGKTT) contributes to the ATP binding site.

Belongs to the MurCDEF family.

It localises to the cytoplasm. It carries out the reaction UDP-N-acetyl-alpha-D-muramate + L-alanine + ATP = UDP-N-acetyl-alpha-D-muramoyl-L-alanine + ADP + phosphate + H(+). Its pathway is cell wall biogenesis; peptidoglycan biosynthesis. In terms of biological role, cell wall formation. This Psychromonas ingrahamii (strain DSM 17664 / CCUG 51855 / 37) protein is UDP-N-acetylmuramate--L-alanine ligase.